A 96-amino-acid polypeptide reads, in one-letter code: Small ribosomal subunit protein bS6 (96 aa).

Belongs to the bacterial ribosomal protein bS6 family.

In terms of biological role, binds together with bS18 to 16S ribosomal RNA. In Streptomyces coelicolor (strain ATCC BAA-471 / A3(2) / M145), this protein is Small ribosomal subunit protein bS6 (rpsF).